The following is a 947-amino-acid chain: Protocadherin alpha-4 (947 aa).

Positions 1–29 (MEFSWGSGQESRRLLLLLLLLAAWEAGNG) are cleaved as a signal peptide. Cadherin domains lie at 30–133 (QLHY…PPVF), 134–242 (PATQ…APAF), 243–350 (DRTI…VPDL), 351–455 (EFKS…APAF), 456–565 (AQPE…APAL), and 588–678 (GHVV…APKA). Residues 30-697 (QLHYSVSEEA…GPDAALVDVN (668 aa)) are Extracellular-facing. Cysteine 96 and cysteine 102 are joined by a disulfide. Asparagine 139, asparagine 257, and asparagine 265 each carry an N-linked (GlcNAc...) asparagine glycan. N-linked (GlcNAc...) asparagine glycosylation is present at asparagine 548. The helical transmembrane segment at 698–718 (VYLIIAICAVSSLLVLTLLLY) threads the bilayer. Residues 719 to 947 (TALRCSALPT…GNSTTDNSDQ (229 aa)) are Cytoplasmic-facing. PXXP repeat units lie at residues 734–737 (PGKP), 774–777 (PSLP), 796–799 (PRQP), 829–832 (PGGP), 870–873 (PGNP), and 888–891 (PGSP). A 6 X 4 AA repeats of P-X-X-P region spans residues 734-891 (PGKPTLVCSS…PDKFIIPGSP (158 aa)). Residues 738–947 (TLVCSSAVGS…GNSTTDNSDQ (210 aa)) are required for interaction with FYN. Disordered stretches follow at residues 754-805 (RRPR…DWRY), 828-853 (GPGGPDQQWPTVSSATPEPEAGEVSP), and 868-947 (YGPG…NSDQ). The segment covering 906–920 (DKSDFITFGKKEETK) has biased composition (basic and acidic residues).

As to quaternary structure, forms homodimers in trans (molecules expressed by two different cells). Forms promiscuous heterodimers in cis (at the plasma membrane of the same cell) with other protocadherins. Interacts with FYN.

Its subcellular location is the cell membrane. Calcium-dependent cell-adhesion protein involved in cells self-recognition and non-self discrimination. Thereby, it is involved in the establishment and maintenance of specific neuronal connections in the brain. In Homo sapiens (Human), this protein is Protocadherin alpha-4.